The sequence spans 512 residues: Maturase K (512 aa).

It belongs to the intron maturase 2 family. MatK subfamily.

The protein localises to the plastid. The protein resides in the chloroplast. Its function is as follows. Usually encoded in the trnK tRNA gene intron. Probably assists in splicing its own and other chloroplast group II introns. The polypeptide is Maturase K (Lilium tsingtauense (Twilight lily)).